Consider the following 319-residue polypeptide: Acetyl-coenzyme A carboxylase carboxyl transferase subunit alpha (319 aa).

The region spanning 39–293 is the CoA carboxyltransferase C-terminal domain; it reads RLQKKSNDLT…KAVLEKQLHE (255 aa).

It belongs to the AccA family. In terms of assembly, acetyl-CoA carboxylase is a heterohexamer composed of biotin carboxyl carrier protein (AccB), biotin carboxylase (AccC) and two subunits each of ACCase subunit alpha (AccA) and ACCase subunit beta (AccD).

The protein localises to the cytoplasm. It carries out the reaction N(6)-carboxybiotinyl-L-lysyl-[protein] + acetyl-CoA = N(6)-biotinyl-L-lysyl-[protein] + malonyl-CoA. It participates in lipid metabolism; malonyl-CoA biosynthesis; malonyl-CoA from acetyl-CoA: step 1/1. In terms of biological role, component of the acetyl coenzyme A carboxylase (ACC) complex. First, biotin carboxylase catalyzes the carboxylation of biotin on its carrier protein (BCCP) and then the CO(2) group is transferred by the carboxyltransferase to acetyl-CoA to form malonyl-CoA. The protein is Acetyl-coenzyme A carboxylase carboxyl transferase subunit alpha of Neisseria meningitidis serogroup C / serotype 2a (strain ATCC 700532 / DSM 15464 / FAM18).